The sequence spans 101 residues: Small ribosomal subunit protein uS14 (101 aa).

Belongs to the universal ribosomal protein uS14 family. In terms of assembly, part of the 30S ribosomal subunit. Contacts proteins S3 and S10.

In terms of biological role, binds 16S rRNA, required for the assembly of 30S particles and may also be responsible for determining the conformation of the 16S rRNA at the A site. This is Small ribosomal subunit protein uS14 from Chelativorans sp. (strain BNC1).